Consider the following 458-residue polypeptide: Probable ECA polymerase (458 aa).

The next 11 helical transmembrane spans lie at 3-23 (LAQF…VLTL), 37-57 (VFFS…TCLL), 65-85 (VVPV…YAIY), 112-132 (THLT…IFFL), 154-174 (GVAL…VYFL), 180-200 (AWFF…VIVG), 201-221 (GTRA…IVRG), 222-242 (WISL…MFWL), 340-360 (LVVM…GMII), 377-397 (YKAA…IVLA), and 409-429 (VFFC…YWLF).

The protein belongs to the WzyE family. Probably part of a complex composed of WzxE, WzyE and WzzE.

The protein resides in the cell inner membrane. It functions in the pathway bacterial outer membrane biogenesis; enterobacterial common antigen biosynthesis. In terms of biological role, probably involved in the polymerization of enterobacterial common antigen (ECA) trisaccharide repeat units. This chain is Probable ECA polymerase, found in Serratia proteamaculans (strain 568).